Here is a 66-residue protein sequence, read N- to C-terminus: Ranalexin (66 aa).

Residues Met-1–Ser-20 form the signal peptide. A propeptide spans Leu-21 to Glu-44 (small acidic peptide). Cys-60 and Cys-66 are joined by a disulfide.

Belongs to the frog skin active peptide (FSAP) family. Brevinin subfamily. Expressed by the skin dorsal glands.

It localises to the secreted. Functionally, potent microbicidal activity, active against S.aureus and E.coli. It also acts as a membrane-disruptive agent at higher concentrations. This chain is Ranalexin, found in Aquarana catesbeiana (American bullfrog).